Reading from the N-terminus, the 507-residue chain is ATP synthase subunit alpha, chloroplastic (507 aa).

ATP is bound at residue 170 to 177 (GDRQTGKT).

The protein belongs to the ATPase alpha/beta chains family. In terms of assembly, F-type ATPases have 2 components, CF(1) - the catalytic core - and CF(0) - the membrane proton channel. CF(1) has five subunits: alpha(3), beta(3), gamma(1), delta(1), epsilon(1). CF(0) has four main subunits: a, b, b' and c.

The protein localises to the plastid. It localises to the chloroplast thylakoid membrane. The enzyme catalyses ATP + H2O + 4 H(+)(in) = ADP + phosphate + 5 H(+)(out). Functionally, produces ATP from ADP in the presence of a proton gradient across the membrane. The alpha chain is a regulatory subunit. The protein is ATP synthase subunit alpha, chloroplastic of Drimys granadensis.